The chain runs to 212 residues: Thiamine-phosphate synthase (212 aa).

Residues 43-47 and Asn-75 contribute to the 4-amino-2-methyl-5-(diphosphooxymethyl)pyrimidine site; that span reads QYRNK. Residues Asp-76 and Asp-95 each coordinate Mg(2+). Ser-114 is a binding site for 4-amino-2-methyl-5-(diphosphooxymethyl)pyrimidine. 141–143 is a 2-[(2R,5Z)-2-carboxy-4-methylthiazol-5(2H)-ylidene]ethyl phosphate binding site; it reads SMT. Lys-144 lines the 4-amino-2-methyl-5-(diphosphooxymethyl)pyrimidine pocket. Gly-171 is a binding site for 2-[(2R,5Z)-2-carboxy-4-methylthiazol-5(2H)-ylidene]ethyl phosphate.

Belongs to the thiamine-phosphate synthase family. Mg(2+) serves as cofactor.

It carries out the reaction 2-[(2R,5Z)-2-carboxy-4-methylthiazol-5(2H)-ylidene]ethyl phosphate + 4-amino-2-methyl-5-(diphosphooxymethyl)pyrimidine + 2 H(+) = thiamine phosphate + CO2 + diphosphate. It catalyses the reaction 2-(2-carboxy-4-methylthiazol-5-yl)ethyl phosphate + 4-amino-2-methyl-5-(diphosphooxymethyl)pyrimidine + 2 H(+) = thiamine phosphate + CO2 + diphosphate. The catalysed reaction is 4-methyl-5-(2-phosphooxyethyl)-thiazole + 4-amino-2-methyl-5-(diphosphooxymethyl)pyrimidine + H(+) = thiamine phosphate + diphosphate. The protein operates within cofactor biosynthesis; thiamine diphosphate biosynthesis; thiamine phosphate from 4-amino-2-methyl-5-diphosphomethylpyrimidine and 4-methyl-5-(2-phosphoethyl)-thiazole: step 1/1. Functionally, condenses 4-methyl-5-(beta-hydroxyethyl)thiazole monophosphate (THZ-P) and 2-methyl-4-amino-5-hydroxymethyl pyrimidine pyrophosphate (HMP-PP) to form thiamine monophosphate (TMP). This Nitrosomonas eutropha (strain DSM 101675 / C91 / Nm57) protein is Thiamine-phosphate synthase.